Here is a 226-residue protein sequence, read N- to C-terminus: Transcriptional regulatory protein CitT (226 aa).

The Response regulatory domain occupies 3-119; the sequence is HIAIAEDDFR…KFRQVLLQYK (117 aa). Aspartate 54 is subject to 4-aspartylphosphate. Positions 178–197 form a DNA-binding region, H-T-H motif; the sequence is AEELGEKMGASRTTARRYAE.

Phosphorylated by CitS.

It localises to the cytoplasm. In terms of biological role, member of the two-component regulatory system CitT/CitS. Regulates the expression of the citM-yflN operon. Phosphorylated CitT binds to the citM promoter to activate the transcription of the citM-yflN operon. The sequence is that of Transcriptional regulatory protein CitT (citT) from Bacillus subtilis (strain 168).